Consider the following 122-residue polypeptide: uncharacterized protein (122 aa).

Residues 79–114 (VIEDVASAIKEMMESAAKDLDKIEEVIKESLEKYLR) adopt a coiled-coil conformation.

This is an uncharacterized protein from Archaeoglobus fulgidus (strain ATCC 49558 / DSM 4304 / JCM 9628 / NBRC 100126 / VC-16).